Consider the following 36-residue polypeptide: Photosystem II reaction center protein Psb30 (36 aa).

A helical transmembrane segment spans residues 8-28 (IIAQLTVVTLTLLAGPVIVFL).

This sequence belongs to the Psb30/Ycf12 family. As to quaternary structure, PSII is composed of 1 copy each of membrane proteins PsbA, PsbB, PsbC, PsbD, PsbE, PsbF, PsbH, PsbI, PsbJ, PsbK, PsbL, PsbM, PsbT, PsbX, PsbY, PsbZ, Psb30/Ycf12, peripheral proteins of the oxygen-evolving complex and a large number of cofactors. It forms dimeric complexes.

Its subcellular location is the plastid. It is found in the cyanelle thylakoid membrane. Functionally, a core subunit of photosystem II (PSII), probably helps stabilize the reaction center. The sequence is that of Photosystem II reaction center protein Psb30 from Cyanophora paradoxa.